We begin with the raw amino-acid sequence, 337 residues long: GTP 3',8-cyclase (337 aa).

One can recognise a Radical SAM core domain in the interval 18-242 (NFGRRFHYLR…DKADILDGPA (225 aa)). Arg27 serves as a coordination point for GTP. Residues Cys34 and Cys38 each coordinate [4Fe-4S] cluster. Residue Tyr40 coordinates S-adenosyl-L-methionine. Cys41 is a binding site for [4Fe-4S] cluster. Position 76 (Arg76) interacts with GTP. Gly80 contributes to the S-adenosyl-L-methionine binding site. Residue Thr107 coordinates GTP. Ser131 contacts S-adenosyl-L-methionine. Lys168 lines the GTP pocket. Met202 is a binding site for S-adenosyl-L-methionine. 2 residues coordinate [4Fe-4S] cluster: Cys265 and Cys268. 270–272 (RLR) serves as a coordination point for GTP. Residue Cys282 coordinates [4Fe-4S] cluster.

This sequence belongs to the radical SAM superfamily. MoaA family. As to quaternary structure, monomer and homodimer. The cofactor is [4Fe-4S] cluster.

The catalysed reaction is GTP + AH2 + S-adenosyl-L-methionine = (8S)-3',8-cyclo-7,8-dihydroguanosine 5'-triphosphate + 5'-deoxyadenosine + L-methionine + A + H(+). Its pathway is cofactor biosynthesis; molybdopterin biosynthesis. In terms of biological role, catalyzes the cyclization of GTP to (8S)-3',8-cyclo-7,8-dihydroguanosine 5'-triphosphate. This Shewanella denitrificans (strain OS217 / ATCC BAA-1090 / DSM 15013) protein is GTP 3',8-cyclase.